We begin with the raw amino-acid sequence, 458 residues long: tRNA(Ile)-lysidine synthase (458 aa).

35 to 40 (SGGVDS) contributes to the ATP binding site.

This sequence belongs to the tRNA(Ile)-lysidine synthase family.

Its subcellular location is the cytoplasm. It catalyses the reaction cytidine(34) in tRNA(Ile2) + L-lysine + ATP = lysidine(34) in tRNA(Ile2) + AMP + diphosphate + H(+). In terms of biological role, ligates lysine onto the cytidine present at position 34 of the AUA codon-specific tRNA(Ile) that contains the anticodon CAU, in an ATP-dependent manner. Cytidine is converted to lysidine, thus changing the amino acid specificity of the tRNA from methionine to isoleucine. The protein is tRNA(Ile)-lysidine synthase of Nitrosomonas europaea (strain ATCC 19718 / CIP 103999 / KCTC 2705 / NBRC 14298).